The primary structure comprises 249 residues: 3-deoxy-manno-octulosonate cytidylyltransferase (249 aa).

It belongs to the KdsB family.

Its subcellular location is the cytoplasm. The catalysed reaction is 3-deoxy-alpha-D-manno-oct-2-ulosonate + CTP = CMP-3-deoxy-beta-D-manno-octulosonate + diphosphate. The protein operates within nucleotide-sugar biosynthesis; CMP-3-deoxy-D-manno-octulosonate biosynthesis; CMP-3-deoxy-D-manno-octulosonate from 3-deoxy-D-manno-octulosonate and CTP: step 1/1. It participates in bacterial outer membrane biogenesis; lipopolysaccharide biosynthesis. Functionally, activates KDO (a required 8-carbon sugar) for incorporation into bacterial lipopolysaccharide in Gram-negative bacteria. This is 3-deoxy-manno-octulosonate cytidylyltransferase from Serratia proteamaculans (strain 568).